A 37-amino-acid chain; its full sequence is Large ribosomal subunit protein bL36 (37 aa).

This sequence belongs to the bacterial ribosomal protein bL36 family.

In Fusobacterium nucleatum subsp. nucleatum (strain ATCC 25586 / DSM 15643 / BCRC 10681 / CIP 101130 / JCM 8532 / KCTC 2640 / LMG 13131 / VPI 4355), this protein is Large ribosomal subunit protein bL36 (rpmJ).